Consider the following 191-residue polypeptide: dTTP/UTP pyrophosphatase (191 aa).

The active-site Proton acceptor is Asp-68.

This sequence belongs to the Maf family. YhdE subfamily. It depends on a divalent metal cation as a cofactor.

It localises to the cytoplasm. The enzyme catalyses dTTP + H2O = dTMP + diphosphate + H(+). It carries out the reaction UTP + H2O = UMP + diphosphate + H(+). Its function is as follows. Nucleoside triphosphate pyrophosphatase that hydrolyzes dTTP and UTP. May have a dual role in cell division arrest and in preventing the incorporation of modified nucleotides into cellular nucleic acids. This Thermoanaerobacter pseudethanolicus (strain ATCC 33223 / 39E) (Clostridium thermohydrosulfuricum) protein is dTTP/UTP pyrophosphatase.